Here is a 193-residue protein sequence, read N- to C-terminus: Peptidyl-tRNA hydrolase (193 aa).

Position 16 (Tyr16) interacts with tRNA. The active-site Proton acceptor is His21. TRNA is bound by residues Phe67, Asn69, and Asn115.

This sequence belongs to the PTH family. Monomer.

The protein resides in the cytoplasm. The enzyme catalyses an N-acyl-L-alpha-aminoacyl-tRNA + H2O = an N-acyl-L-amino acid + a tRNA + H(+). Its function is as follows. Hydrolyzes ribosome-free peptidyl-tRNAs (with 1 or more amino acids incorporated), which drop off the ribosome during protein synthesis, or as a result of ribosome stalling. In terms of biological role, catalyzes the release of premature peptidyl moieties from peptidyl-tRNA molecules trapped in stalled 50S ribosomal subunits, and thus maintains levels of free tRNAs and 50S ribosomes. The polypeptide is Peptidyl-tRNA hydrolase (Vesicomyosocius okutanii subsp. Calyptogena okutanii (strain HA)).